A 428-amino-acid polypeptide reads, in one-letter code: Histidinol dehydrogenase (428 aa).

Positions 125, 186, and 209 each coordinate NAD(+). Substrate contacts are provided by S232, Q254, and H257. Q254 and H257 together coordinate Zn(2+). Residues E322 and H323 each act as proton acceptor in the active site. Substrate-binding residues include H323, D356, E410, and H415. D356 serves as a coordination point for Zn(2+). H415 provides a ligand contact to Zn(2+).

Belongs to the histidinol dehydrogenase family. Zn(2+) serves as cofactor.

The catalysed reaction is L-histidinol + 2 NAD(+) + H2O = L-histidine + 2 NADH + 3 H(+). It participates in amino-acid biosynthesis; L-histidine biosynthesis; L-histidine from 5-phospho-alpha-D-ribose 1-diphosphate: step 9/9. Functionally, catalyzes the sequential NAD-dependent oxidations of L-histidinol to L-histidinaldehyde and then to L-histidine. This Lactiplantibacillus plantarum (strain ATCC BAA-793 / NCIMB 8826 / WCFS1) (Lactobacillus plantarum) protein is Histidinol dehydrogenase.